A 365-amino-acid chain; its full sequence is tRNA/tmRNA (uracil-C(5))-methyltransferase (365 aa).

Positions 189, 217, 222, 238, and 298 each coordinate S-adenosyl-L-methionine. Cys-323 acts as the Nucleophile in catalysis. Catalysis depends on Glu-357, which acts as the Proton acceptor.

It belongs to the class I-like SAM-binding methyltransferase superfamily. RNA M5U methyltransferase family. TrmA subfamily.

It catalyses the reaction uridine(54) in tRNA + S-adenosyl-L-methionine = 5-methyluridine(54) in tRNA + S-adenosyl-L-homocysteine + H(+). The enzyme catalyses uridine(341) in tmRNA + S-adenosyl-L-methionine = 5-methyluridine(341) in tmRNA + S-adenosyl-L-homocysteine + H(+). Functionally, dual-specificity methyltransferase that catalyzes the formation of 5-methyluridine at position 54 (m5U54) in all tRNAs, and that of position 341 (m5U341) in tmRNA (transfer-mRNA). This is tRNA/tmRNA (uracil-C(5))-methyltransferase from Shewanella halifaxensis (strain HAW-EB4).